Here is a 507-residue protein sequence, read N- to C-terminus: Protein O-glucosyltransferase 3 (507 aa).

The first 20 residues, 1-20 (MRRLPRALLLQLRLALLVAA), serve as a signal peptide directing secretion. One copy of the Filamin repeat lies at 24–134 (EVLVSAPRSL…VAQSPYILKG (111 aa)). N-linked (GlcNAc...) asparagine glycosylation is found at Asn61 and Asn306. The short motif at 504–507 (REEL) is the Prevents secretion from ER element.

It belongs to the KDELC family.

Its subcellular location is the endoplasmic reticulum lumen. It carries out the reaction L-seryl-[EGF-like domain protein] + UDP-alpha-D-glucose = 3-O-(beta-D-glucosyl)-L-seryl-[EGF-like domain protein] + UDP + H(+). The enzyme catalyses L-seryl-[EGF-like domain protein] + UDP-alpha-D-xylose = 3-O-(beta-D-xylosyl)-L-seryl-[EGF-like domain protein] + UDP + H(+). It participates in protein modification; protein glycosylation. In terms of biological role, protein glucosyltransferase that catalyzes the transfer of glucose from UDP-glucose to a serine residue within the consensus sequence peptide C-X-N-T-X-G-S-F-X-C. Can also catalyze the transfer of xylose from UDP-xylose but less efficiently. Specifically targets extracellular EGF repeats of proteins such as NOTCH1, NOTCH3, FBN1, FBN2 and LTBP1. May regulate the transport of NOTCH1 and NOTCH3 to the plasma membrane and thereby the Notch signaling pathway. This chain is Protein O-glucosyltransferase 3, found in Homo sapiens (Human).